Consider the following 257-residue polypeptide: Small ribosomal subunit protein eS1 (257 aa).

Positions 237–257 (GADGEKVDRPDDYEPPVQQEV) are disordered. A compositionally biased stretch (basic and acidic residues) spans 239-248 (DGEKVDRPDD).

It belongs to the eukaryotic ribosomal protein eS1 family. Component of the small ribosomal subunit. Mature ribosomes consist of a small (40S) and a large (60S) subunit. The 40S subunit contains about 33 different proteins and 1 molecule of RNA (18S). The 60S subunit contains about 49 different proteins and 3 molecules of RNA (28S, 5.8S and 5S).

The protein localises to the cytoplasm. This Caenorhabditis elegans protein is Small ribosomal subunit protein eS1.